A 350-amino-acid chain; its full sequence is Ion-translocating oxidoreductase complex subunit D (350 aa).

The next 3 membrane-spanning stretches (helical) occupy residues 25–45 (ILCALPGVAVQCFFFGWGTVI), 89–109 (IPPLAPWWVTVIGTLFAIVIV), and 129–149 (VMLLISFPVQMTSWVAPSVIA). Thr-185 is subject to FMN phosphoryl threonine. A run of 5 helical transmembrane segments spans residues 212–232 (GFGVGWFWVNLAYLAGGLVML), 239–259 (WHITAGILAALFICSGVGYLL), 264–284 (FTGPLLHLFSGATMLAAFFIA), 298–318 (LVFGALIGILVYIIRTFGGYP), and 319–339 (DAFAFAILLANLCAPFIDHYM).

The protein belongs to the NqrB/RnfD family. As to quaternary structure, the complex is composed of six subunits: RnfA, RnfB, RnfC, RnfD, RnfE and RnfG. FMN is required as a cofactor.

The protein resides in the cell inner membrane. Part of a membrane-bound complex that couples electron transfer with translocation of ions across the membrane. In Shewanella sediminis (strain HAW-EB3), this protein is Ion-translocating oxidoreductase complex subunit D.